A 101-amino-acid chain; its full sequence is Small ribosomal subunit protein uS10 (101 aa).

Belongs to the universal ribosomal protein uS10 family. In terms of assembly, part of the 30S ribosomal subunit.

Functionally, involved in the binding of tRNA to the ribosomes. This is Small ribosomal subunit protein uS10 from Mycobacterium ulcerans (strain Agy99).